The primary structure comprises 71 residues: Large ribosomal subunit protein bL31 (71 aa).

Zn(2+) is bound by residues Cys16, Cys18, Cys37, and Cys40.

The protein belongs to the bacterial ribosomal protein bL31 family. Type A subfamily. In terms of assembly, part of the 50S ribosomal subunit. The cofactor is Zn(2+).

Binds the 23S rRNA. The protein is Large ribosomal subunit protein bL31 of Solidesulfovibrio magneticus (strain ATCC 700980 / DSM 13731 / RS-1) (Desulfovibrio magneticus).